Reading from the N-terminus, the 202-residue chain is Small ribosomal subunit protein uS5 (202 aa).

The 64-residue stretch at 46–109 (LKSEVLSVGF…RRAKLNIVPV (64 aa)) folds into the S5 DRBM domain.

The protein belongs to the universal ribosomal protein uS5 family. In terms of assembly, part of the 30S ribosomal subunit. Contacts protein S4.

Functionally, with S4 and S12 plays an important role in translational accuracy. This chain is Small ribosomal subunit protein uS5, found in Thermofilum pendens (strain DSM 2475 / Hrk 5).